The chain runs to 413 residues: Imidazolonepropionase (413 aa).

Fe(3+) contacts are provided by histidine 79 and histidine 81. 2 residues coordinate Zn(2+): histidine 79 and histidine 81. Positions 88, 151, and 184 each coordinate 4-imidazolone-5-propanoate. Tyrosine 151 provides a ligand contact to N-formimidoyl-L-glutamate. Histidine 248 is a Fe(3+) binding site. Histidine 248 contacts Zn(2+). Glutamate 251 contacts 4-imidazolone-5-propanoate. Aspartate 322 is a Fe(3+) binding site. Aspartate 322 is a Zn(2+) binding site. Residues asparagine 324 and glycine 326 each coordinate N-formimidoyl-L-glutamate. Serine 327 contributes to the 4-imidazolone-5-propanoate binding site.

Belongs to the metallo-dependent hydrolases superfamily. HutI family. The cofactor is Zn(2+). It depends on Fe(3+) as a cofactor.

Its subcellular location is the cytoplasm. The enzyme catalyses 4-imidazolone-5-propanoate + H2O = N-formimidoyl-L-glutamate. It functions in the pathway amino-acid degradation; L-histidine degradation into L-glutamate; N-formimidoyl-L-glutamate from L-histidine: step 3/3. In terms of biological role, catalyzes the hydrolytic cleavage of the carbon-nitrogen bond in imidazolone-5-propanoate to yield N-formimidoyl-L-glutamate. It is the third step in the universal histidine degradation pathway. The protein is Imidazolonepropionase of Fusobacterium nucleatum subsp. nucleatum (strain ATCC 25586 / DSM 15643 / BCRC 10681 / CIP 101130 / JCM 8532 / KCTC 2640 / LMG 13131 / VPI 4355).